The primary structure comprises 360 residues: DNA replication and repair protein RecF (360 aa).

Residue 30–37 (GNNGSGKT) participates in ATP binding.

This sequence belongs to the RecF family.

It localises to the cytoplasm. Functionally, the RecF protein is involved in DNA metabolism; it is required for DNA replication and normal SOS inducibility. RecF binds preferentially to single-stranded, linear DNA. It also seems to bind ATP. This Mannheimia succiniciproducens (strain KCTC 0769BP / MBEL55E) protein is DNA replication and repair protein RecF.